The sequence spans 118 residues: Aspartate 1-decarboxylase 1 (118 aa).

Catalysis depends on S25, which acts as the Schiff-base intermediate with substrate; via pyruvic acid. S25 carries the post-translational modification Pyruvic acid (Ser). Position 57 (T57) interacts with substrate. The Proton donor role is filled by Y58. 73 to 75 (GAA) is a binding site for substrate.

It belongs to the PanD family. Heterooctamer of four alpha and four beta subunits. Pyruvate serves as cofactor. In terms of processing, is synthesized initially as an inactive proenzyme, which is activated by self-cleavage at a specific serine bond to produce a beta-subunit with a hydroxyl group at its C-terminus and an alpha-subunit with a pyruvoyl group at its N-terminus.

It localises to the cytoplasm. It catalyses the reaction L-aspartate + H(+) = beta-alanine + CO2. It functions in the pathway cofactor biosynthesis; (R)-pantothenate biosynthesis; beta-alanine from L-aspartate: step 1/1. Catalyzes the pyruvoyl-dependent decarboxylation of aspartate to produce beta-alanine. The chain is Aspartate 1-decarboxylase 1 from Gloeobacter violaceus (strain ATCC 29082 / PCC 7421).